Consider the following 179-residue polypeptide: ATP-dependent protease subunit HslV (179 aa).

Residue threonine 7 is part of the active site. Glycine 162, cysteine 165, and threonine 168 together coordinate Na(+).

It belongs to the peptidase T1B family. HslV subfamily. A double ring-shaped homohexamer of HslV is capped on each side by a ring-shaped HslU homohexamer. The assembly of the HslU/HslV complex is dependent on binding of ATP.

The protein localises to the cytoplasm. The catalysed reaction is ATP-dependent cleavage of peptide bonds with broad specificity.. Its activity is regulated as follows. Allosterically activated by HslU binding. Functionally, protease subunit of a proteasome-like degradation complex believed to be a general protein degrading machinery. This chain is ATP-dependent protease subunit HslV, found in Bordetella avium (strain 197N).